The primary structure comprises 261 residues: Global transcriptional regulator CodY (261 aa).

The interval 1 to 159 (MANLLSKTRR…SSTVVGIQLL (159 aa)) is GAF domain. Positions 207 to 226 (ASVIADRIGITRSVIVNALR) form a DNA-binding region, H-T-H motif.

It belongs to the CodY family.

It is found in the cytoplasm. DNA-binding global transcriptional regulator which is involved in the adaptive response to starvation and acts by directly or indirectly controlling the expression of numerous genes in response to nutrient availability. During rapid exponential growth, CodY is highly active and represses genes whose products allow adaptation to nutrient depletion. This is Global transcriptional regulator CodY from Streptococcus mutans serotype c (strain ATCC 700610 / UA159).